We begin with the raw amino-acid sequence, 1028 residues long: Serine/threonine-protein kinase fray2 (1028 aa).

A disordered region spans residues 1-67 (MSDDKYHHDK…PKPRKNYPNS (67 aa)). A compositionally biased stretch (low complexity) spans 20–54 (KQSTAAALSSSSTLASSSSMTTTTTTTSTTTTAAS). The 260-residue stretch at 71–330 (YELKETIGKG…PSKLLEHRFF (260 aa)) folds into the Protein kinase domain. ATP-binding positions include 77–85 (IGKGGSGLV) and lysine 100. Aspartate 195 serves as the catalytic Proton acceptor. A Phosphothreonine; by autocatalysis modification is found at threonine 230. The span at 368 to 381 (TSSPQFDTGHSNSA) shows a compositional bias: polar residues. Disordered regions lie at residues 368–467 (TSSP…STVV), 486–561 (AYHQ…LQQP), and 580–914 (DLIT…IQSK). Composition is skewed to low complexity over residues 387–419 (PNEN…NNNN) and 432–458 (TPSH…SNHT). 2 stretches are compositionally biased toward polar residues: residues 503–518 (IPNH…SAHS) and 528–542 (IHPT…VVNN). A compositionally biased stretch (low complexity) spans 543-561 (TQQPQTLQPPQQQHQLQQP). A compositionally biased stretch (polar residues) spans 595-616 (IPSSSSHGNIPSLVTTSPKSPL). 2 stretches are compositionally biased toward low complexity: residues 617-642 (QHQQ…ISSN) and 683-700 (SSRA…SHTS). 4 stretches are compositionally biased toward basic and acidic residues: residues 701–714 (SSDE…SDRK), 728–742 (SKRD…DRSN), 753–855 (VSRD…DRSR), and 865–893 (SRDS…DYKS).

Belongs to the protein kinase superfamily. STE Ser/Thr protein kinase family. STE20 subfamily. Requires Mn(2+) as cofactor. Post-translationally, undergoes autophosphorylation in the catalytic domain.

The catalysed reaction is L-seryl-[protein] + ATP = O-phospho-L-seryl-[protein] + ADP + H(+). The enzyme catalyses L-threonyl-[protein] + ATP = O-phospho-L-threonyl-[protein] + ADP + H(+). This is Serine/threonine-protein kinase fray2 from Dictyostelium discoideum (Social amoeba).